The chain runs to 547 residues: Probable protein kinase UbiB (547 aa).

The Protein kinase domain occupies 121–501; that stretch reads EFSPDPMASA…QLRSERRWRR (381 aa). Residues 127–135 and lysine 149 each bind ATP; that span reads MASASVAQV. The Proton acceptor role is filled by aspartate 284. The next 2 membrane-spanning stretches (helical) occupy residues 502-522 and 523-543; these read GFIA…HAGQ and WLAD…GVML.

This sequence belongs to the ABC1 family. UbiB subfamily.

It is found in the cell inner membrane. It functions in the pathway cofactor biosynthesis; ubiquinone biosynthesis [regulation]. Is probably a protein kinase regulator of UbiI activity which is involved in aerobic coenzyme Q (ubiquinone) biosynthesis. In Marinobacter nauticus (strain ATCC 700491 / DSM 11845 / VT8) (Marinobacter aquaeolei), this protein is Probable protein kinase UbiB.